The following is a 447-amino-acid chain: Protein odr-4 homolog (447 aa).

The next 2 helical transmembrane spans lie at 82–102 and 425–445; these read MLPG…ELAD and IGVI…FHYF.

The protein belongs to the ODR-4 family. As to expression, ubiquitously expressed.

The protein localises to the membrane. In terms of biological role, may play a role in the trafficking of a subset of G-protein coupled receptors. This chain is Protein odr-4 homolog (Odr4), found in Mus musculus (Mouse).